The chain runs to 380 residues: Tetratricopeptide repeat protein 19, mitochondrial (380 aa).

The transit peptide at 1–70 directs the protein to the mitochondrion; sequence MFRLLSWSLG…AALAWFSRPA (70 aa). TPR repeat units lie at residues 136–169, 179–212, 237–270, 279–312, and 318–351; these read TYTY…LLGG, IEIS…LEEK, GMCL…SEEI, IVLM…ARQI, and HMVL…AKLK.

This sequence belongs to the TTC19 family. As to quaternary structure, binds to the mature mitochondrial complex III dimer, after the incorporation of the Rieske protein UQCRFS1. Interacts with UQCRC1 and UQCRFS1. Interacts with ZFYVE26 and CHMP4B. Proteolytically cleaved by PARL.

Its subcellular location is the mitochondrion inner membrane. In terms of biological role, required for the preservation of the structural and functional integrity of mitochondrial respiratory complex III by allowing the physiological turnover of the Rieske protein UQCRFS1. Involved in the clearance of UQCRFS1 N-terminal fragments, which are produced upon incorporation of UQCRFS1 into the complex III and whose presence is detrimental for its catalytic activity. The polypeptide is Tetratricopeptide repeat protein 19, mitochondrial (TTC19) (Homo sapiens (Human)).